Here is a 347-residue protein sequence, read N- to C-terminus: Tryptophan--tRNA ligase (347 aa).

ATP contacts are provided by residues Gln10–Ser12 and Gly18–Asn19. Positions Ala11–Asn19 match the 'HIGH' region motif. Residue Asp140 participates in L-tryptophan binding. Residues Gly152 to Asp154, Ile191, and Lys200 to Ser204 each bind ATP. A 'KMSKS' region motif is present at residues Lys200–Ser204.

It belongs to the class-I aminoacyl-tRNA synthetase family. In terms of assembly, homodimer.

It is found in the cytoplasm. It catalyses the reaction tRNA(Trp) + L-tryptophan + ATP = L-tryptophyl-tRNA(Trp) + AMP + diphosphate + H(+). Catalyzes the attachment of tryptophan to tRNA(Trp). The sequence is that of Tryptophan--tRNA ligase from Mycoplasma genitalium (strain ATCC 33530 / DSM 19775 / NCTC 10195 / G37) (Mycoplasmoides genitalium).